A 327-amino-acid polypeptide reads, in one-letter code: uncharacterized protein (327 aa).

The segment covering 1 to 17 has biased composition (low complexity); it reads MASMAAAIAASRSAVMS. The tract at residues 1 to 22 is disordered; sequence MASMAAAIAASRSAVMSGNRPL. The residue at position 2 (A2) is an N-acetylalanine. Position 37 is a phosphoserine (S37). Residues 76-113 are disordered; it reads GPRAPAPRDPGDSEELTRFPGLRGPTGQKVVRFGDEDL. S129 bears the Phosphoserine mark. Polar residues predominate over residues 134 to 148; that stretch reads SISALSIQEPSNGTA. The segment at 134–299 is disordered; it reads SISALSIQEP…PDVRQDDGED (166 aa). The segment covering 162–176 has biased composition (low complexity); that stretch reads SQALKSSQGSRSSSL. S175 carries the post-translational modification Phosphoserine. Basic and acidic residues-rich tracts occupy residues 182–202 and 233–252; these read TRKE…RGEG and PAPK…RQEQ. Residue S289 is modified to Phosphoserine.

The protein localises to the cytoplasm. This is an uncharacterized protein from Homo sapiens (Human).